Reading from the N-terminus, the 1137-residue chain is Ribonucleoside-diphosphate reductase large subunit (1137 aa).

The interval 1-32 (MASRPAASSPVEARAPVGGQEAGGPSAATQGE) is disordered. The short motif at 64-84 (SYRISDNNFVQCGSNCTMIID) is the RIP homotypic interaction motif (RHIM) element. Disordered stretches follow at residues 124–159 (GGTPRRSAGTSTGTQTADVPTEALGGPPPPPRFTLG) and 173–315 (AVFG…YPVP). Positions 131–141 (AGTSTGTQTAD) are enriched in polar residues. The segment covering 196–206 (SDSDDSEDTDS) has biased composition (acidic residues). Residues 281 to 290 (AGAGLAADPA) are compositionally biased toward low complexity. The span at 291–304 (VARDDAEGLSDPRP) shows a compositional bias: basic and acidic residues. Residues Thr-566, 581–582 (SC), Gly-612, 791–795 (NLCTE), and 968–972 (PTAAS) contribute to the substrate site. Cys-582 and Cys-808 are disulfide-bonded. Asn-791 serves as the catalytic Proton acceptor. Residue Cys-793 is the Cysteine radical intermediate of the active site. Glu-795 functions as the Proton acceptor in the catalytic mechanism.

The protein belongs to the ribonucleoside diphosphate reductase large chain family. In terms of assembly, heterotetramer composed of a homodimer of the large subunit (R1) and a homodimer of the small subunit (R2). Larger multisubunit protein complex are also active, composed of (R1)n(R2)n. Self-assembles (via RIP homotypic interaction motif/RHIM) into homomeric fibrillar amyloid structures. Interacts (via RHIM) with human RIPK1 (via RHIM). Interacts (via RHIM) with human RIPK3 (via RHIM); the interaction leads to heteromeric amyloid assemblies. Interacts (via RHIM) with human ZBP1 (via RHIM); the interaction leads to heteromeric amyloid assemblies. Interacts (via C-terminus) with host CASP8.

The catalysed reaction is a 2'-deoxyribonucleoside 5'-diphosphate + [thioredoxin]-disulfide + H2O = a ribonucleoside 5'-diphosphate + [thioredoxin]-dithiol. Its function is as follows. Ribonucleoside-diphosphate reductase holoenzyme that provides the precursors necessary for viral DNA synthesis. Allows virus growth in non-dividing cells, as well as reactivation from latency in infected hosts. Catalyzes the biosynthesis of deoxyribonucleotides from the corresponding ribonucleotides. Prevents host necroptosis by targeting host RIPK1 and RIPK3, thereby hampering the formation of necroptotic RIPK1-RIPK3 complexes. Forms hetero-amyloid structures with host proteins RIPK3 or ZBP1 which may prevent RIPK3- and ZBP1-mediated necroptosis. In addition, inhibits extrinsic apoptosis by targeting host CASP8. This is Ribonucleoside-diphosphate reductase large subunit from Human herpesvirus 1 (strain 17) (HHV-1).